The chain runs to 130 residues: Fumarate reductase subunit C (130 aa).

The next 3 membrane-spanning stretches (helical) occupy residues 30 to 50 (EGTSIPAVWFSVLLIYGVFSL), 60 to 80 (FVSFLQNPLVLFLNILTLFAA), and 110 to 130 (IKALWVVTVVASAIILAVALL).

This sequence belongs to the FrdC family. Part of an enzyme complex containing four subunits: a flavoprotein (FrdA), an iron-sulfur protein (FrdB), and two hydrophobic anchor proteins (FrdC and FrdD).

The protein resides in the cell inner membrane. Its function is as follows. Two distinct, membrane-bound, FAD-containing enzymes are responsible for the catalysis of fumarate and succinate interconversion; fumarate reductase is used in anaerobic growth, and succinate dehydrogenase is used in aerobic growth. Anchors the catalytic components of the fumarate reductase complex to the cell inner membrane, binds quinones. This is Fumarate reductase subunit C from Yersinia pestis bv. Antiqua (strain Angola).